The primary structure comprises 46 residues: Delta-actitoxin-Avd1d (46 aa).

Intrachain disulfides connect Cys4-Cys44, Cys6-Cys34, and Cys27-Cys45.

Belongs to the sea anemone sodium channel inhibitory toxin family. Type I subfamily.

It is found in the secreted. It localises to the nematocyst. Its function is as follows. Binds specifically to voltage-gated sodium channels (Nav), thereby delaying their inactivation during signal transduction. Thus it strongly stimulates mammalian cardiac muscle contraction. The sequence is that of Delta-actitoxin-Avd1d from Anemonia sulcata (Mediterranean snakelocks sea anemone).